Consider the following 732-residue polypeptide: Catalase-peroxidase (732 aa).

The signal sequence occupies residues Met-1–Ser-45. Residues Trp-97–Tyr-220 constitute a cross-link (tryptophyl-tyrosyl-methioninium (Trp-Tyr) (with M-246)). The active-site Proton acceptor is the His-98. The segment at residues Tyr-220–Met-246 is a cross-link (tryptophyl-tyrosyl-methioninium (Tyr-Met) (with W-97)). His-261 contacts heme b.

The protein belongs to the peroxidase family. Peroxidase/catalase subfamily. As to quaternary structure, homodimer or homotetramer. The cofactor is heme b. In terms of processing, formation of the three residue Trp-Tyr-Met cross-link is important for the catalase, but not the peroxidase activity of the enzyme.

The catalysed reaction is H2O2 + AH2 = A + 2 H2O. It catalyses the reaction 2 H2O2 = O2 + 2 H2O. Its function is as follows. Bifunctional enzyme with both catalase and broad-spectrum peroxidase activity. This is Catalase-peroxidase from Rhizobium rhizogenes (strain K84 / ATCC BAA-868) (Agrobacterium radiobacter).